Reading from the N-terminus, the 981-residue chain is Polyhomeotic-like protein 3 (981 aa).

Over residues 1–28 the composition is skewed to low complexity; the sequence is MDSEPSSGTSVSTTASSTTTTTITTSSS. Disordered stretches follow at residues 1–33, 102–127, 224–280, and 307–407; these read MDSE…MQQP, LSSG…TSIL, LSSS…TAVT, and QIPL…SQSP. Residues 224–255 show a composition bias toward polar residues; the sequence is LSSSQNGSPKSAGQTQSLTICHNKTTVTSSKI. Phosphoserine occurs at positions 231, 261, 269, and 312. The span at 256 to 266 shows a compositional bias: basic and acidic residues; that stretch reads SQRDPSPESKK. Over residues 321-340 the composition is skewed to low complexity; it reads QLLLQQQQQQIQPITLQSPS. Over residues 360-373 the composition is skewed to polar residues; sequence APSNAQPQHCSPVQ. Positions 381–395 are enriched in low complexity; it reads VSPNQAQSAQQSVVV. Residues T607 and T612 each carry the phosphothreonine modification. Phosphoserine is present on S614. The tract at residues 650–690 is disordered; sequence KSPSDPTHASAPAPPLLIPAASTRSSSTSLASSTPSLENKP. The span at 667–686 shows a compositional bias: low complexity; that stretch reads IPAASTRSSSTSLASSTPSL. Residues K689 and K730 each participate in a glycyl lysine isopeptide (Lys-Gly) (interchain with G-Cter in SUMO2) cross-link. The HD1 signature appears at 689–718; sequence KPPQAIVKPQILTHVIEGFVIQEGLEPFPV. Residues S759 and S760 each carry the phosphoserine modification. The FCS-type zinc finger occupies 774–808; that stretch reads EEMDSELLKCEFCGKMGYPNEFLRSKRFCTMSCAK. Zn(2+) contacts are provided by C783, C786, C802, and C806. K808 is covalently cross-linked (Glycyl lysine isopeptide (Lys-Gly) (interchain with G-Cter in SUMO2)). 2 disordered regions span residues 825–844 and 863–888; these read RKPD…GPEG and EDVA…ERER. The region spanning 917 to 981 is the SAM domain; sequence WTVDDVWAFI…CARINSLKDS (65 aa).

As to quaternary structure, component of a PRC1-like complex. As to expression, ubiquitous expression.

It localises to the nucleus. Functionally, component of a Polycomb group (PcG) multiprotein PRC1-like complex, a complex class required to maintain the transcriptionally repressive state of many genes, including Hox genes, throughout development. PcG PRC1 complex acts via chromatin remodeling and modification of histones; it mediates monoubiquitination of histone H2A 'Lys-119', rendering chromatin heritably changed in its expressibility. The sequence is that of Polyhomeotic-like protein 3 (Phc3) from Mus musculus (Mouse).